A 563-amino-acid polypeptide reads, in one-letter code: Kelch repeat and BTB domain-containing protein 1 (563 aa).

Positions 21-88 (CDINIVINDE…IYGIPLSLTN (68 aa)) constitute a BTB domain. Residues 123 to 219 (CIDFYIYADK…SLLSPQVIKS (97 aa)) enclose the BACK domain. 6 Kelch repeats span residues 252-297 (IELI…VLDN), 298-346 (IIYM…ADDE), 347-395 (YIYC…MLNG), 397-441 (IYVI…VHAG), 442-492 (KIYI…SAHN), and 494-538 (LYVG…CEPI).

As to quaternary structure, interacts (via BTB domain) with host CUL3.

It localises to the host cytoplasm. Its function is as follows. Probable substrate-specific adapter of CUL3-containing E3 ubiquitin-protein ligases which mediate the ubiquitination and subsequent proteasomal degradation of host target proteins. The sequence is that of Kelch repeat and BTB domain-containing protein 1 (KBTB1) from Cowpox virus (strain Brighton Red) (CPV).